A 640-amino-acid polypeptide reads, in one-letter code: Threonine--tRNA ligase (640 aa).

The TGS domain occupies 1–59 (MKIKVKLPDGKEKEYDRGITPAEIAKELGVKKAIGAVVNGELWDLKRPIENDCELRLVT). The segment at 240 to 531 (DHRKLGPHLE…LIEHFAGAFP (292 aa)) is catalytic. Zn(2+) contacts are provided by Cys-332, His-383, and His-508.

This sequence belongs to the class-II aminoacyl-tRNA synthetase family. In terms of assembly, homodimer. The cofactor is Zn(2+).

The protein localises to the cytoplasm. It carries out the reaction tRNA(Thr) + L-threonine + ATP = L-threonyl-tRNA(Thr) + AMP + diphosphate + H(+). Its function is as follows. Catalyzes the attachment of threonine to tRNA(Thr) in a two-step reaction: L-threonine is first activated by ATP to form Thr-AMP and then transferred to the acceptor end of tRNA(Thr). Also edits incorrectly charged L-seryl-tRNA(Thr). This is Threonine--tRNA ligase from Thermotoga petrophila (strain ATCC BAA-488 / DSM 13995 / JCM 10881 / RKU-1).